Here is a 431-residue protein sequence, read N- to C-terminus: Enolase (431 aa).

Glutamine 163 is a binding site for (2R)-2-phosphoglycerate. Catalysis depends on glutamate 205, which acts as the Proton donor. Mg(2+)-binding residues include aspartate 242, glutamate 288, and aspartate 315. The (2R)-2-phosphoglycerate site is built by lysine 340, arginine 369, serine 370, and lysine 391. Lysine 340 serves as the catalytic Proton acceptor.

The protein belongs to the enolase family. Requires Mg(2+) as cofactor.

The protein localises to the cytoplasm. Its subcellular location is the secreted. It is found in the cell surface. The enzyme catalyses (2R)-2-phosphoglycerate = phosphoenolpyruvate + H2O. It participates in carbohydrate degradation; glycolysis; pyruvate from D-glyceraldehyde 3-phosphate: step 4/5. Its function is as follows. Catalyzes the reversible conversion of 2-phosphoglycerate (2-PG) into phosphoenolpyruvate (PEP). It is essential for the degradation of carbohydrates via glycolysis. The sequence is that of Enolase from Latilactobacillus sakei subsp. sakei (strain 23K) (Lactobacillus sakei subsp. sakei).